Here is a 185-residue protein sequence, read N- to C-terminus: Homeobox expressed in ES cells 1 (185 aa).

The segment at residues 108–167 (GRRPRTAFTQNQIEVLENVFRVNCYPGIDIREDLAQKLNLEEDRIQIWFQNRRAKLKRSH) is a DNA-binding region (homeobox).

Belongs to the ANF homeobox family. As to quaternary structure, can form heterodimers with PROP1 in binding to DNA. Interacts with TLE1.

It is found in the nucleus. In terms of biological role, required for the normal development of the forebrain, eyes and other anterior structures such as the olfactory placodes and pituitary gland. Possible transcriptional repressor. Binds to the palindromic PIII sequence, 5'-AGCTTGAGTCTAATTGAATTAACTGTAC-3'. HESX1 and PROP1 bind as heterodimers on this palindromic site, and, in vitro, HESX1 can antagonize PROP1 activation. This chain is Homeobox expressed in ES cells 1 (HESX1), found in Pan troglodytes (Chimpanzee).